Here is a 343-residue protein sequence, read N- to C-terminus: Protein RecA (343 aa).

64-71 (GPESSGKT) lines the ATP pocket.

Belongs to the RecA family.

It is found in the cytoplasm. In terms of biological role, can catalyze the hydrolysis of ATP in the presence of single-stranded DNA, the ATP-dependent uptake of single-stranded DNA by duplex DNA, and the ATP-dependent hybridization of homologous single-stranded DNAs. It interacts with LexA causing its activation and leading to its autocatalytic cleavage. The polypeptide is Protein RecA (Cereibacter sphaeroides (strain ATCC 17023 / DSM 158 / JCM 6121 / CCUG 31486 / LMG 2827 / NBRC 12203 / NCIMB 8253 / ATH 2.4.1.) (Rhodobacter sphaeroides)).